The primary structure comprises 118 residues: Non-specific lipid-transfer protein 3 (118 aa).

Residues 1 to 25 form the signal peptide; that stretch reads MARAAATQLVLVAMVAAMLLVATDA. 4 disulfide bridges follow: Cys29–Cys77, Cys39–Cys54, Cys55–Cys100, and Cys75–Cys114.

The protein belongs to the plant LTP family.

Plant non-specific lipid-transfer proteins transfer phospholipids as well as galactolipids across membranes. May play a role in wax or cutin deposition in the cell walls of expanding epidermal cells and certain secretory tissues. This is Non-specific lipid-transfer protein 3 (LTP3) from Hordeum vulgare (Barley).